Consider the following 300-residue polypeptide: ADP-polyphosphate phosphotransferase 1 (300 aa).

This sequence belongs to the polyphosphate kinase 2 (PPK2) family. Class I subfamily. In terms of assembly, homotetramer. Requires Mg(2+) as cofactor.

The catalysed reaction is [phosphate](n) + ATP = [phosphate](n+1) + ADP. It carries out the reaction [phosphate](n) + GTP = [phosphate](n+1) + GDP. Uses inorganic polyphosphate (polyP) as a donor to convert ADP to ATP. Can also convert GDP to GTP, with lower efficiency. Cannot dephosphorylate ATP in the presence of polyP. The polypeptide is ADP-polyphosphate phosphotransferase 1 (Rhizobium meliloti (strain 1021) (Ensifer meliloti)).